A 113-amino-acid polypeptide reads, in one-letter code: MKCLVVLTALFGISTASFLGCNLSPVWGVKNAYRSGLQTYWCPPGLKFDPFGCCCDFPFDDLVEDLAGLLGGAGNGGNGGGGNGGNGGGGNGGNNGNGNGNNGLKKYETCYDC.

Positions Met1–Ala16 are cleaved as a signal peptide. Residues Gly81 to Asn101 show a composition bias toward gly residues. A disordered region spans residues Gly81–Gly103.

In terms of tissue distribution, nacreous layer of shell (at protein level).

The protein localises to the secreted. This is an uncharacterized protein from Margaritifera margaritifera (Freshwater pearl mussel).